Reading from the N-terminus, the 107-residue chain is Phosphoribosyl-ATP pyrophosphatase (107 aa).

This sequence belongs to the PRA-PH family.

The protein resides in the cytoplasm. It carries out the reaction 1-(5-phospho-beta-D-ribosyl)-ATP + H2O = 1-(5-phospho-beta-D-ribosyl)-5'-AMP + diphosphate + H(+). The protein operates within amino-acid biosynthesis; L-histidine biosynthesis; L-histidine from 5-phospho-alpha-D-ribose 1-diphosphate: step 2/9. This is Phosphoribosyl-ATP pyrophosphatase from Zymomonas mobilis subsp. mobilis (strain ATCC 31821 / ZM4 / CP4).